A 196-amino-acid chain; its full sequence is GTP cyclohydrolase-2 (196 aa).

Residue 49–53 coordinates GTP; sequence RVHSE. Zn(2+) contacts are provided by C54, C65, and C67. Residues Q70, 92–94, and T114 each bind GTP; that span reads EGR. Catalysis depends on D126, which acts as the Proton acceptor. R128 functions as the Nucleophile in the catalytic mechanism. GTP contacts are provided by T149 and K154.

Belongs to the GTP cyclohydrolase II family. As to quaternary structure, homodimer. Zn(2+) serves as cofactor.

It catalyses the reaction GTP + 4 H2O = 2,5-diamino-6-hydroxy-4-(5-phosphoribosylamino)-pyrimidine + formate + 2 phosphate + 3 H(+). The protein operates within cofactor biosynthesis; riboflavin biosynthesis; 5-amino-6-(D-ribitylamino)uracil from GTP: step 1/4. In terms of biological role, catalyzes the conversion of GTP to 2,5-diamino-6-ribosylamino-4(3H)-pyrimidinone 5'-phosphate (DARP), formate and pyrophosphate. The sequence is that of GTP cyclohydrolase-2 from Escherichia coli O45:K1 (strain S88 / ExPEC).